Consider the following 1389-residue polypeptide: Carboxypeptidase D (1389 aa).

A signal peptide spans 1-25 (MAGAARGLLWAALSLCLLPEPLRAA). Topologically, residues 26-1308 (HIKKAEAAAA…ENRIFGLPRE (1283 aa)) are extracellular. The 338-residue stretch at 46 to 383 (RYLHAAELGQ…ESLLTFIEKV (338 aa)) folds into the Peptidase M14 1 domain. Positions 95–133 (LPEARQDGEKKKKEEEEEEEEEEGEEGGGGALPGRPQVK) are disordered. Over residues 96 to 108 (PEARQDGEKKKKE) the composition is skewed to basic and acidic residues. The span at 109 to 120 (EEEEEEEEEGEE) shows a compositional bias: acidic residues. Positions 139 and 142 each coordinate Zn(2+). A glycan (N-linked (GlcNAc...) asparagine) is linked at N172. The segment at 188–235 (ERAREGDCGGGGGGGGEGGGEPGGRENSRGRDLNRSFPDQFGSAQPDL) is disordered. Positions 195-209 (CGGGGGGGGEGGGEP) are enriched in gly residues. A compositionally biased stretch (basic and acidic residues) spans 210-221 (GGRENSRGRDLN). N-linked (GlcNAc...) asparagine glycosylation occurs at N221. H260 provides a ligand contact to Zn(2+). Catalysis depends on E353, which acts as the Proton donor/acceptor. 4 N-linked (GlcNAc...) asparagine glycosylation sites follow: N402, N413, N432, and N472. The region spanning 511–801 (RHHHFSDMEI…RSLLQFIKQV (291 aa)) is the Peptidase M14 2 domain. Residues H573 and E576 each coordinate Zn(2+). The segment at 614-639 (SMNPDGYEKSQEGDRGGTVGRNNSNN) is disordered. Residues 619–628 (GYEKSQEGDR) show a composition bias toward basic and acidic residues. N635 carries an N-linked (GlcNAc...) asparagine glycan. H680 is a binding site for Zn(2+). E771 acts as the Proton donor/acceptor in catalysis. N820, N876, N958, N981, N1073, and N1151 each carry an N-linked (GlcNAc...) asparagine glycan. The region spanning 935–1220 (RYRPYKDLSE…KSLLSMLVEV (286 aa)) is the Peptidase M14 3 domain. Residues 1309-1329 (LVVTVAGASMSALVLTACIIW) form a helical membrane-spanning segment. S-palmitoyl cysteine attachment occurs at residues C1326, C1330, and C1332. The Cytoplasmic segment spans residues 1330-1389 (CVCSIKSNRHKDGFPTLRQHHDDYEDEIRMMSTGSKKSLLSHEFQDETDTEEETLYSSKH). The disordered stretch occupies residues 1367–1389 (SLLSHEFQDETDTEEETLYSSKH).

Belongs to the peptidase M14 family. As to quaternary structure, binds to pre-S, hepatitis B virus large envelope protein, via the carboxypeptidase-like domain. Zn(2+) is required as a cofactor. Post-translationally, the N-terminus is blocked. Expressed in liver, lung, kidney, heart, stomach, pancreas, spleen, gall bladder and intestine, but not in skeletal muscle.

The protein resides in the cell membrane. It carries out the reaction Releases C-terminal Arg and Lys from polypeptides.. This Anas platyrhynchos (Mallard) protein is Carboxypeptidase D (CPD).